Here is a 1088-residue protein sequence, read N- to C-terminus: DNA damage-binding protein 1a (1088 aa).

The protein belongs to the DDB1 family. Component of the CDD complex, at least composed of COP10, DET1 and DDB1A. Component of the CUL4-RBX1-CDD complex. Component of the CUL4-RBX1-DDB1-PRL1 E3 ubiquitin-protein ligase complex. Component of the UV-DDB complex, which is composed of DDB1A and DDB2. Interacts with RAE1. Interacts with WDR55. Interacts with ATCSA-1. Interacts with DDA1. Binds to ASG2; the subcellular localization of this complex depends on ASG2 farnesylation status. Binds to KTN80.2/DWA3. Interacts with HTD1. Interacts directly with DHU1.

Its subcellular location is the cytoplasm. It is found in the nucleus. Its pathway is protein modification; protein ubiquitination. Its function is as follows. Component of light signal transduction machinery. Involved in repression of photomorphogenesis in darkness by participating in the CDD complex, a complex probably required to regulate the activity of ubiquitin conjugating enzymes (E2s). Repression of photomorphogenesis is probably mediated by ubiquitination and subsequent degradation of photomorphogenesis-promoting factors such as HY5, HYH and LAF1. Plays a role in DNA repair by forming with DDB2 the UV-damaged DNA-binding protein complex (UV-DDB). Component of the CUL4-RBX1-DDB1-PRL1 E3 ubiquitin-protein ligase complex. This Arabidopsis thaliana (Mouse-ear cress) protein is DNA damage-binding protein 1a.